The chain runs to 443 residues: Glucose-6-phosphate isomerase (443 aa).

Residue E285 is the Proton donor of the active site. Residues H306 and K420 contribute to the active site.

It belongs to the GPI family.

Its subcellular location is the cytoplasm. The catalysed reaction is alpha-D-glucose 6-phosphate = beta-D-fructose 6-phosphate. It participates in carbohydrate biosynthesis; gluconeogenesis. The protein operates within carbohydrate degradation; glycolysis; D-glyceraldehyde 3-phosphate and glycerone phosphate from D-glucose: step 2/4. Catalyzes the reversible isomerization of glucose-6-phosphate to fructose-6-phosphate. The sequence is that of Glucose-6-phosphate isomerase from Staphylococcus aureus (strain USA300).